A 648-amino-acid chain; its full sequence is Chaperone protein HtpG (648 aa).

Residues 1 to 353 (MNARVEQLEF…AQDMSLNVSR (353 aa)) form an a; substrate-binding region. A b region spans residues 354–567 (EILQQDRQIK…TFGITPALAR (214 aa)). The segment at 568–648 (IYRATGQDVP…LLADRLTRTL (81 aa)) is c.

It belongs to the heat shock protein 90 family. In terms of assembly, homodimer.

It localises to the cytoplasm. Molecular chaperone. Has ATPase activity. This Mycobacterium ulcerans (strain Agy99) protein is Chaperone protein HtpG.